The sequence spans 536 residues: MFS-type efflux pump MFS1 (536 aa).

Helical transmembrane passes span 30–50, 80–100, and 102–122; these read VTGLKLAVIVTGLCLSVLLVA, YLLTICAFQLIFGKIYTFFPV, and WVFLIAITIFEIGSAICGAAP. A glycan (N-linked (GlcNAc...) asparagine) is linked at Asn123. A run of 3 helical transmembrane segments spans residues 133–153, 163–183, and 191–211; these read VAGIGSAGIFSGALIIIAYSI, GAIGGMYGIASVAGPLMGGAF, and WCFYINLPIGAVTILSILIFL. N-linked (GlcNAc...) asparagine glycosylation is present at Asn221. 8 helical membrane passes run 234 to 254, 264 to 284, 306 to 326, 342 to 362, 366 to 386, 400 to 420, 426 to 446, and 503 to 523; these read IGTAFFMPSIICLLLALQWGG, IIALFVVFAVLISGFIYFQIR, FFLFTIGSAFFIMVYYLPIWF, IPMVLSLVVLSIASGITVTAI, APLYYVSTVLTSIGAGLLTTF, IIFGAGVGTGLQLSIIAAQAV, VAVGTVIMMFCQTLGGALFVS, and TWYVATALAALSVIGSVGMEW.

The protein belongs to the major facilitator superfamily. TCR/Tet family.

The protein localises to the cell membrane. Its function is as follows. MFS-type efflux pump involved in the modulation susceptibility to azoles, including fluconazole, itraconazole, miconazole and voriconazole. Also confers increased resistance chloramphenicol and thiamphenicol, suggesting that it acts as a pleiotropic drug transporter with a broad substrate spectrum. Finally, increases the tolerance to cycloheximide when expressed in S.cerevisiae, but not in dermatophyte species. In Arthroderma benhamiae (strain ATCC MYA-4681 / CBS 112371) (Trichophyton mentagrophytes), this protein is MFS-type efflux pump MFS1.